The following is a 144-amino-acid chain: Phospholipase A2, membrane associated (144 aa).

The signal sequence occupies residues 1-20 (MKTLLLLAVIMAIGLLQVHG). Disulfide bonds link C46/C137, C48/C64, C63/C117, C69/C144, C70/C110, C79/C103, and C97/C108. Residues Y47, G49, and S51 each coordinate Ca(2+). H67 is a catalytic residue. D68 provides a ligand contact to Ca(2+). D111 is an active-site residue.

It belongs to the phospholipase A2 family. Ca(2+) is required as a cofactor.

It localises to the secreted. It is found in the cell membrane. Its subcellular location is the mitochondrion outer membrane. It carries out the reaction a 1,2-diacyl-sn-glycero-3-phosphoethanolamine + H2O = a 1-acyl-sn-glycero-3-phosphoethanolamine + a fatty acid + H(+). The catalysed reaction is 1-hexadecanoyl-2-(9Z-octadecenoyl)-sn-glycero-3-phosphoethanolamine + H2O = 1-hexadecanoyl-sn-glycero-3-phosphoethanolamine + (9Z)-octadecenoate + H(+). It catalyses the reaction 1-hexadecanoyl-2-(9Z,12Z-octadecadienoyl)-sn-glycero-3-phosphoethanolamine + H2O = 1-hexadecanoyl-sn-glycero-3-phosphoethanolamine + (9Z,12Z)-octadecadienoate + H(+). The enzyme catalyses 1-hexadecanoyl-2-(5Z,8Z,11Z,14Z-eicosatetraenoyl)-sn-glycero-3-phosphoethanolamine + H2O = 1-hexadecanoyl-sn-glycero-3-phosphoethanolamine + (5Z,8Z,11Z,14Z)-eicosatetraenoate + H(+). It carries out the reaction N-hexadecanoyl-1,2-di-(9Z-octadecenoyl)-sn-glycero-3-phosphoethanolamine + H2O = N-hexadecanoyl-1-(9Z-octadecenoyl)-sn-glycero-3-phosphoethanolamine + (9Z)-octadecenoate + H(+). The catalysed reaction is 1,2-dihexadecanoyl-sn-glycero-3-phospho-(1'-sn-glycerol) + H2O = 1-hexadecanoyl-sn-glycero-3-phospho-(1'-sn-glycerol) + hexadecanoate + H(+). It catalyses the reaction 1-hexadecanoyl-2-(9Z-octadecenoyl)-sn-glycero-3-phosphoglycerol + H2O = 1-hexadecanoyl-sn-glycero-3-phosphoglycerol + (9Z)-octadecenoate + H(+). The enzyme catalyses 1-hexadecanoyl-2-(9Z-octadecenoyl)-sn-glycero-3-phospho-(1'-sn-glycerol) + H2O = 1-hexadecanoyl-sn-glycero-3-phospho-(1'-sn-glycerol) + (9Z)-octadecenoate + H(+). It carries out the reaction a 1,2-diacyl-sn-glycero-3-phosphocholine + H2O = a 1-acyl-sn-glycero-3-phosphocholine + a fatty acid + H(+). The catalysed reaction is 1,2-dihexadecanoyl-sn-glycero-3-phosphocholine + H2O = 1-hexadecanoyl-sn-glycero-3-phosphocholine + hexadecanoate + H(+). It catalyses the reaction 1-hexadecanoyl-2-(9Z-octadecenoyl)-sn-glycero-3-phosphocholine + H2O = 1-hexadecanoyl-sn-glycero-3-phosphocholine + (9Z)-octadecenoate + H(+). The enzyme catalyses 1-hexadecanoyl-2-(9Z,12Z-octadecadienoyl)-sn-glycero-3-phosphocholine + H2O = (9Z,12Z)-octadecadienoate + 1-hexadecanoyl-sn-glycero-3-phosphocholine + H(+). It carries out the reaction 1-hexadecanoyl-2-(4Z,7Z,10Z,13Z,16Z,19Z-docosahexaenoyl)-sn-glycero-3-phosphocholine + H2O = (4Z,7Z,10Z,13Z,16Z,19Z)-docosahexaenoate + 1-hexadecanoyl-sn-glycero-3-phosphocholine + H(+). In terms of biological role, secretory calcium-dependent phospholipase A2 that primarily targets extracellular phospholipids with implications in host antimicrobial defense, inflammatory response and tissue regeneration. Hydrolyzes the ester bond of the fatty acyl group attached at sn-2 position of phospholipids (phospholipase A2 activity) with preference for phosphatidylethanolamines and phosphatidylglycerols over phosphatidylcholines. Contributes to lipid remodeling of cellular membranes and generation of lipid mediators involved in pathogen clearance. Displays bactericidal activity against Gram-positive bacteria by directly hydrolyzing phospholipids of the bacterial membrane. Upon sterile inflammation, targets membrane phospholipids of extracellular mitochondria released from activated platelets, generating free unsaturated fatty acids such as arachidonate that is used by neighboring leukocytes to synthesize inflammatory eicosanoids such as leukotrienes. Simultaneously, by compromising mitochondrial membrane integrity, promotes the release in circulation of potent damage-associated molecular pattern molecules that activate the innate immune response. Plays a stem cell regulator role in the intestinal crypt. Within intracellular compartment mediates Paneth cell differentiation and its stem cell supporting functions by inhibiting Wnt signaling pathway in intestinal stem cell (ICS). Secreted in the intestinal lumen upon inflammation, acts in an autocrine way and promotes prostaglandin E2 synthesis that stimulates Wnt signaling pathway in ICS cells and tissue regeneration. May play a role in the biosynthesis of N-acyl ethanolamines that regulate energy metabolism and inflammation. Hydrolyzes N-acyl phosphatidylethanolamines to N-acyl lysophosphatidylethanolamines, which are further cleaved by a lysophospholipase D to release N-acyl ethanolamines. Independent of its catalytic activity, acts as a ligand for integrins. Binds to and activates integrins ITGAV:ITGB3, ITGA4:ITGB1 and ITGA5:ITGB1. Binds to a site (site 2) which is distinct from the classical ligand-binding site (site 1) and induces integrin conformational changes and enhanced ligand binding to site 1. Induces cell proliferation in an integrin-dependent manner. The polypeptide is Phospholipase A2, membrane associated (PLA2G2A) (Bos taurus (Bovine)).